The chain runs to 64 residues: Small cysteine-rich protein (64 aa).

The signal sequence occupies residues 1–17; the sequence is FVCVQARQIDPEQILRT. Positions 18-19 are excised as a propeptide; the sequence is PE.

Post-translationally, contains 4 disulfide bonds.

It is found in the secreted. The protein resides in the nematocyst. This is Small cysteine-rich protein from Anemonia viridis (Snakelocks anemone).